The primary structure comprises 234 residues: Putative N-acetylmannosamine-6-phosphate 2-epimerase (234 aa).

Belongs to the NanE family.

It carries out the reaction an N-acyl-D-glucosamine 6-phosphate = an N-acyl-D-mannosamine 6-phosphate. It functions in the pathway amino-sugar metabolism; N-acetylneuraminate degradation; D-fructose 6-phosphate from N-acetylneuraminate: step 3/5. Converts N-acetylmannosamine-6-phosphate (ManNAc-6-P) to N-acetylglucosamine-6-phosphate (GlcNAc-6-P). This Klebsiella pneumoniae subsp. pneumoniae (strain ATCC 700721 / MGH 78578) protein is Putative N-acetylmannosamine-6-phosphate 2-epimerase.